The sequence spans 146 residues: MKLHELKPSEGSRKERNRVGRGTGSGNGKTSGRGHKGQKARSGGGVRLGFEGGQLPLFRRIPKRGFTNINRKEFAIVNLDVLNRFEDGTEVTPELLIESGIIRNEKSGIKILSDGNIEKKLTVKANKFSAAAKEAIEAAGGKTEVI.

The segment covering 1–18 (MKLHELKPSEGSRKERNR) has biased composition (basic and acidic residues). Positions 1-50 (MKLHELKPSEGSRKERNRVGRGTGSGNGKTSGRGHKGQKARSGGGVRLGF) are disordered. Gly residues predominate over residues 21–31 (RGTGSGNGKTS).

It belongs to the universal ribosomal protein uL15 family. In terms of assembly, part of the 50S ribosomal subunit.

Functionally, binds to the 23S rRNA. In Listeria welshimeri serovar 6b (strain ATCC 35897 / DSM 20650 / CCUG 15529 / CIP 8149 / NCTC 11857 / SLCC 5334 / V8), this protein is Large ribosomal subunit protein uL15.